The chain runs to 194 residues: FMN-dependent NADH:quinone oxidoreductase (194 aa).

FMN-binding positions include serine 10 and 90-93 (MYNL).

It belongs to the azoreductase type 1 family. Homodimer. FMN serves as cofactor.

It catalyses the reaction 2 a quinone + NADH + H(+) = 2 a 1,4-benzosemiquinone + NAD(+). The catalysed reaction is N,N-dimethyl-1,4-phenylenediamine + anthranilate + 2 NAD(+) = 2-(4-dimethylaminophenyl)diazenylbenzoate + 2 NADH + 2 H(+). In terms of biological role, quinone reductase that provides resistance to thiol-specific stress caused by electrophilic quinones. Functionally, also exhibits azoreductase activity. Catalyzes the reductive cleavage of the azo bond in aromatic azo compounds to the corresponding amines. The chain is FMN-dependent NADH:quinone oxidoreductase from Haemophilus influenzae (strain ATCC 51907 / DSM 11121 / KW20 / Rd).